A 720-amino-acid chain; its full sequence is Mitogen-activated protein kinase 6 (720 aa).

Met-1 participates in a covalent cross-link: Peptide (Met-Gly) (interchain with G-Cter in ubiquitin). The Protein kinase domain occupies 20-316 (YMDLKPLGCG…AEEALSHPYM (297 aa)). ATP-binding positions include 26–34 (LGCGGNGLV) and Lys-49. Asp-152 (proton acceptor) is an active-site residue. Ser-189 carries the post-translational modification Phosphoserine; by PAK1, PAK2 and PAK3. Residues 189 to 191 (SEG) carry the SEG motif motif. The short motif at 332 to 337 (FHIEDE) is the FRIEDE motif element. A phosphoserine mark is found at Ser-386, Ser-554, and Ser-556. A disordered region spans residues 638 to 657 (SEMLETEPVEEGKRGERGRE). The segment covering 647–657 (EEGKRGERGRE) has biased composition (basic and acidic residues). At Ser-683 the chain carries Phosphoserine. The segment covering 700-714 (AMKSSPQIPHKTYSS) has biased composition (polar residues). Residues 700 to 720 (AMKSSPQIPHKTYSSILKHLN) are disordered.

It belongs to the protein kinase superfamily. CMGC Ser/Thr protein kinase family. MAP kinase subfamily. In terms of assembly, heterodimer with ERK4/MAPK4. Interacts with (via FRIEDE motif) MAPKAPK5. Interacts with UBE3A; this interaction may be indirect and mediated by HERC2, possibly via HERC2 interaction with NEURL4. Requires Mg(2+) as cofactor. Phosphorylated at Ser-189 by PAK1, PAK2 and PAK3 resulting in catalytic activation. Phosphorylated by MAPKAPK5 at other sites. Post-translationally, ubiquitination at Met-1 leads to degradation by the proteasome pathway.

It localises to the cytoplasm. Its subcellular location is the nucleus. It carries out the reaction L-seryl-[protein] + ATP = O-phospho-L-seryl-[protein] + ADP + H(+). It catalyses the reaction L-threonyl-[protein] + ATP = O-phospho-L-threonyl-[protein] + ADP + H(+). Activated by phosphorylation at Ser-189. Its function is as follows. Atypical MAPK protein. Phosphorylates microtubule-associated protein 2 (MAP2) and MAPKAPK5. The precise role of the complex formed with MAPKAPK5 is still unclear, but the complex follows a complex set of phosphorylation events: upon interaction with atypical MAPKAPK5, ERK3/MAPK6 is phosphorylated at Ser-189 and then mediates phosphorylation and activation of MAPKAPK5, which in turn phosphorylates ERK3/MAPK6. May promote entry in the cell cycle. This Mus musculus (Mouse) protein is Mitogen-activated protein kinase 6 (Mapk6).